A 296-amino-acid polypeptide reads, in one-letter code: Nitrogenase iron protein (296 aa).

G11–S18 provides a ligand contact to ATP. Residue C99 coordinates [4Fe-4S] cluster. R102 bears the ADP-ribosylarginine; by dinitrogenase reductase ADP-ribosyltransferase mark. [4Fe-4S] cluster is bound at residue C134.

This sequence belongs to the NifH/BchL/ChlL family. Homodimer. Requires [4Fe-4S] cluster as cofactor. Post-translationally, the reversible ADP-ribosylation of Arg-102 inactivates the nitrogenase reductase and regulates nitrogenase activity.

It carries out the reaction N2 + 8 reduced [2Fe-2S]-[ferredoxin] + 16 ATP + 16 H2O = H2 + 8 oxidized [2Fe-2S]-[ferredoxin] + 2 NH4(+) + 16 ADP + 16 phosphate + 6 H(+). Its function is as follows. The key enzymatic reactions in nitrogen fixation are catalyzed by the nitrogenase complex, which has 2 components: the iron protein and the molybdenum-iron protein. In Dechloromonas aromatica (strain RCB), this protein is Nitrogenase iron protein.